Here is a 217-residue protein sequence, read N- to C-terminus: T-complex protein 10A homolog 1 (217 aa).

The disordered stretch occupies residues 1–26; the sequence is MLAGQLEARDPKEGTHPEDPCPGAGA. Positions 7-19 are enriched in basic and acidic residues; it reads EARDPKEGTHPED. Residues 69–110 are a coiled coil; it reads ADVHGKLRSHIDALREQNMELREKLRALQLQRWKARKKSAAS. The segment at 75 to 96 is leucine-zipper; it reads LRSHIDALREQNMELREKLRAL. Basic and acidic residues predominate over residues 175–192; it reads ERISSWKTPPQEKRDKSL. A disordered region spans residues 175 to 217; that stretch reads ERISSWKTPPQEKRDKSLSRRRQDRRATPTGRPTPCAERRGGV.

The protein belongs to the TCP10 family. Self-associates (via leucine zipper). Interacts (via leucine zipper) with ZIPK/DAPK3 (via leucine zipper). Interacts with MAD4.

The protein resides in the nucleus. May be involved in transcriptional regulation. Has in vitro transcription inhibition activity. The chain is T-complex protein 10A homolog 1 (TCP10L) from Pan troglodytes (Chimpanzee).